Here is a 416-residue protein sequence, read N- to C-terminus: Phosphoribosylamine--glycine ligase (416 aa).

Residues 107 to 313 form the ATP-grasp domain; sequence KDFMKKYNVK…FVDLINAAMD (207 aa). ATP is bound at residue 133–194; it reads LKKCTYPIVI…EEYLEGVEAS (62 aa). Mg(2+) contacts are provided by glutamate 283 and asparagine 285.

The protein belongs to the GARS family. It depends on Mg(2+) as a cofactor. The cofactor is Mn(2+).

The enzyme catalyses 5-phospho-beta-D-ribosylamine + glycine + ATP = N(1)-(5-phospho-beta-D-ribosyl)glycinamide + ADP + phosphate + H(+). Its pathway is purine metabolism; IMP biosynthesis via de novo pathway; N(1)-(5-phospho-D-ribosyl)glycinamide from 5-phospho-alpha-D-ribose 1-diphosphate: step 2/2. This chain is Phosphoribosylamine--glycine ligase, found in Clostridium acetobutylicum (strain ATCC 824 / DSM 792 / JCM 1419 / IAM 19013 / LMG 5710 / NBRC 13948 / NRRL B-527 / VKM B-1787 / 2291 / W).